The primary structure comprises 425 residues: 2-oxoglutarate and iron-dependent oxygenase JMJD4 (425 aa).

The JmjC domain occupies 141-300; sequence SRAFPEQDVY…IMWCFLQDEL (160 aa). Fe cation is bound by residues His188, Asp190, and His268.

It belongs to the JMJD6 family. The cofactor is Fe(2+).

It localises to the cytoplasm. The catalysed reaction is L-lysyl-[protein] + 2-oxoglutarate + O2 = 4-hydroxy-L-lysyl-[protein] + succinate + CO2. Its function is as follows. Catalyzes the 2-oxoglutarate and iron-dependent C4-lysyl hydroxylation of ETF1 at 'Lys-63' thereby promoting the translational termination efficiency of ETF1. The protein is 2-oxoglutarate and iron-dependent oxygenase JMJD4 (JMJD4) of Gallus gallus (Chicken).